The sequence spans 47 residues: Boigatoxin-A (47 aa).

Gln1 bears the Pyrrolidone carboxylic acid mark. 2 disulfides stabilise this stretch: Cys10–Cys34 and Cys13–Cys21.

Monomer. In terms of tissue distribution, expressed by the venom gland.

Its subcellular location is the secreted. Its function is as follows. This toxin may inhibit nicotinic acetylcholine receptor (nAChR). It has poorly reversible postsynaptic blocking activity in a chick muscle preparation and readily reversible inhibitory activity at a presynaptic site in the rat vas deferens prostatic segment most likely to prevent the release of neurotransmitters. The chain is Boigatoxin-A from Boiga dendrophila (Mangrove snake).